Consider the following 503-residue polypeptide: TGF-beta receptor type-1 (503 aa).

The N-terminal stretch at 1–29 is a signal peptide; that stretch reads MEVAAGAPRSRLLLFVLAATATLAPEATA. The Extracellular portion of the chain corresponds to 30–126; sequence FQCFCHLCTK…PPSGLGPVEL (97 aa). 5 cysteine pairs are disulfide-bonded: cysteine 32–cysteine 50, cysteine 34–cysteine 37, cysteine 44–cysteine 67, cysteine 82–cysteine 96, and cysteine 97–cysteine 102. N-linked (GlcNAc...) asparagine glycosylation is present at asparagine 41. A helical membrane pass occupies residues 127 to 147; it reads AAVIAGPVCFVCISLMLMVYI. The Cytoplasmic portion of the chain corresponds to 148–503; sequence CHNRTVIHHR…QLSQQEGIKM (356 aa). Serine 165 is modified (phosphoserine). Residues 175-204 form the GS domain; the sequence is TTLKDLIYDMTTSGSGSGLPLLVQRTIART. Phosphothreonine; by TGFBR2 occurs at positions 185 and 186. A phosphoserine; by TGFBR2 mark is found at serine 187, serine 189, and serine 191. The short motif at 193-194 is the FKBP1A-binding element; the sequence is LP. In terms of domain architecture, Protein kinase spans 205-495; that stretch reads IVLQESIGKG…LRIKKTLSQL (291 aa). ATP contacts are provided by residues 211-219 and lysine 232; that span reads IGKGRFGEV. Residue aspartate 333 is the Proton acceptor of the active site. Lysine 391 participates in a covalent cross-link: Glycyl lysine isopeptide (Lys-Gly) (interchain with G-Cter in SUMO).

The protein belongs to the protein kinase superfamily. TKL Ser/Thr protein kinase family. TGFB receptor subfamily. Homodimer; in the endoplasmic reticulum but also at the cell membrane. Heterohexamer; TGFB1, TGFB2 and TGFB3 homodimeric ligands assemble a functional receptor composed of two TGFBR1 and TGFBR2 heterodimers to form a ligand-receptor heterohexamer. The respective affinity of TGBRB1 and TGFBR2 for the ligands may modulate the kinetics of assembly of the receptor and may explain the different biological activities of TGFB1, TGFB2 and TGFB3. Component of a complex composed of TSC22D1 (via N-terminus), TGFBR1 and TGFBR2; the interaction between TSC22D1 and TGFBR1 is inhibited by SMAD7 and promoted by TGFB1. Interacts with CD109; inhibits TGF-beta receptor activation in keratinocytes. Interacts with RBPMS. Interacts (unphosphorylated) with FKBP1A; prevents TGFBR1 phosphorylation by TGFBR2 and stabilizes it in the inactive conformation. Interacts with SMAD2, SMAD3 and ZFYVE9; ZFYVE9 recruits SMAD2 and SMAD3 to the TGF-beta receptor. Interacts with TRAF6 and MAP3K7; induces MAP3K7 activation by TRAF6. Interacts with PARD6A; involved in TGF-beta induced epithelial to mesenchymal transition. Interacts with NEDD4L. Interacts with SMAD7, SMURF1 and SMURF2; SMAD7 recruits NEDD4L, SMURF1 and SMURF2 to the TGF-beta receptor. Interacts with USP15 and VPS39. Interacts with SDCBP (via C-terminus). Interacts with CAV1 and this interaction is impaired in the presence of SDCBP. Interacts with APPL1; interaction is TGF beta dependent; mediates trafficking of the TGFBR1 from the endosomes to the nucleus via microtubules in a TRAF6-dependent manner. Interacts with GPR50; this interaction promotes the constitutive activation of SMAD signaling pathway. Requires Mg(2+) as cofactor. Mn(2+) is required as a cofactor. In terms of processing, phosphorylated at basal levels in the absence of ligand. Activated upon phosphorylation by TGFBR2, mainly in the GS domain. Phosphorylation in the GS domain abrogates FKBP1A-binding. Post-translationally, N-Glycosylated. Ubiquitinated; undergoes ubiquitination catalyzed by several E3 ubiquitin ligases including SMURF1, SMURF2 and NEDD4L2. Results in the proteasomal and/or lysosomal degradation of the receptor thereby negatively regulating its activity. Deubiquitinated by USP15, leading to stabilization of the protein and enhanced TGF-beta signal. Its ubiquitination and proteasome-mediated degradation is negatively regulated by SDCBP.

The protein localises to the cell membrane. It is found in the cell junction. It localises to the tight junction. The protein resides in the membrane raft. Its subcellular location is the cell surface. The enzyme catalyses L-threonyl-[receptor-protein] + ATP = O-phospho-L-threonyl-[receptor-protein] + ADP + H(+). It carries out the reaction L-seryl-[receptor-protein] + ATP = O-phospho-L-seryl-[receptor-protein] + ADP + H(+). With respect to regulation, kept in an inactive conformation by FKBP1A preventing receptor activation in absence of ligand. CD109 is another inhibitor of the receptor. Functionally, transmembrane serine/threonine kinase forming with the TGF-beta type II serine/threonine kinase receptor, TGFBR2, the non-promiscuous receptor for the TGF-beta cytokines TGFB1, TGFB2 and TGFB3. Transduces the TGFB1, TGFB2 and TGFB3 signal from the cell surface to the cytoplasm and is thus regulating a plethora of physiological and pathological processes including cell cycle arrest in epithelial and hematopoietic cells, control of mesenchymal cell proliferation and differentiation, wound healing, extracellular matrix production, immunosuppression and carcinogenesis. The formation of the receptor complex composed of 2 TGFBR1 and 2 TGFBR2 molecules symmetrically bound to the cytokine dimer results in the phosphorylation and the activation of TGFBR1 by the constitutively active TGFBR2. Activated TGFBR1 phosphorylates SMAD2 which dissociates from the receptor and interacts with SMAD4. The SMAD2-SMAD4 complex is subsequently translocated to the nucleus where it modulates the transcription of the TGF-beta-regulated genes. This constitutes the canonical SMAD-dependent TGF-beta signaling cascade. Also involved in non-canonical, SMAD-independent TGF-beta signaling pathways. For instance, TGFBR1 induces TRAF6 autoubiquitination which in turn results in MAP3K7 ubiquitination and activation to trigger apoptosis. Also regulates epithelial to mesenchymal transition through a SMAD-independent signaling pathway through PARD6A phosphorylation and activation. This is TGF-beta receptor type-1 (TGFBR1) from Sus scrofa (Pig).